Consider the following 475-residue polypeptide: Transmembrane protein 44 (475 aa).

Topologically, residues 1–29 (MGEAPSPAPALWDWDYLDRCFARHRVCIS) are extracellular. A helical transmembrane segment spans residues 30–50 (FGLWICASSCWIAAHALLLYL). Residues 51-61 (RCAQKPRQDQS) are Cytoplasmic-facing. Residues 62–82 (ALCAACCLLTSLCDTVGALLA) form a helical membrane-spanning segment. Over 83 to 88 (RQLTIQ) the chain is Extracellular. Residues 89–109 (VFTGAYLAAIDLVNFMFILFP) traverse the membrane as a helical segment. Over 110–135 (VCGSKFKSNSDREARERKRRRQLRAS) the chain is Cytoplasmic. The chain crosses the membrane as a helical span at residues 136–156 (VFALALPLSLGPCWALWVAVP). Topologically, residues 157 to 179 (KASATIRGPQRRLLASLLQENTE) are extracellular. A helical membrane pass occupies residues 180–200 (ILGYLLGSVAAFGSWASRIPP). Over 201 to 259 (LSRIAPPPTLGITTQHEIWRGQMSKPSQSPSRSPSGHWRAAAQRQVLGTEMCRGKTFPS) the chain is Cytoplasmic. Residues 260 to 280 (IHLWTRLLSALAGLLYASAIV) form a helical membrane-spanning segment. The Extracellular segment spans residues 281 to 294 (AHDQHPEYLLRATP). Residues 295-315 (WFLTSLGRAALDLAIIFLSCV) form a helical membrane-spanning segment. The Cytoplasmic segment spans residues 316–475 (MKSKMRQALG…VRTAHLSDDD (160 aa)). Residues 390-475 (SATRLPGDGQ…VRTAHLSDDD (86 aa)) are disordered. Residues 424–436 (SSGSSSEVSSINS) are compositionally biased toward low complexity. The segment covering 464-475 (DSVRTAHLSDDD) has biased composition (basic and acidic residues). A Phosphoserine modification is found at Ser-465.

Its subcellular location is the membrane. This chain is Transmembrane protein 44 (TMEM44), found in Homo sapiens (Human).